A 123-amino-acid polypeptide reads, in one-letter code: MKLLLLALPMLVLLPQVIPAYSGEKKCWNRSGHCRKQCKDGEAVKDTCKNLRACCIPSNEDHRRVPATSPTPLSDSTPGIIDDILTVRFTTDYFEVSSKKDMVEESEAGRGTETSLPNVHHSS.

The N-terminal stretch at 1-19 is a signal peptide; the sequence is MKLLLLALPMLVLLPQVIP. Cystine bridges form between Cys27–Cys54, Cys34–Cys48, and Cys38–Cys55. A propeptide spanning residues 65 to 123 is cleaved from the precursor; it reads VPATSPTPLSDSTPGIIDDILTVRFTTDYFEVSSKKDMVEESEAGRGTETSLPNVHHSS. A compositionally biased stretch (basic and acidic residues) spans 100-110; sequence KDMVEESEAGR. A disordered region spans residues 100 to 123; sequence KDMVEESEAGRGTETSLPNVHHSS. Residues 112 to 123 show a composition bias toward polar residues; sequence TETSLPNVHHSS.

It belongs to the beta-defensin family. The three-dimensional structure formed by the three intramolecular disulfide bridges is indispensable for antimicrobial activity. As to expression, high-level and epididymis-specific expression. Most abundant in the epithelium of the caput and present in the epididymis lumen and bound to sperm. Also expressed in pancreas.

It is found in the secreted. Host defense peptide that exhibits antimicrobial activity against both Gram-negative bacteria, such as E.coli and S.typhimurium, and Gram-positive bacteria, such as S.aureus and B.subtilis. Inhibits cell adhesion of E.coli on intestinal epithelial enterocytes. Causes rapid permeabilization of both the outer and inner membrane of E.coli, leading to morphological alterations on the bacterial surface. Binds to bacterial lipopolysaccharides (LPS) with high affinity, and may thereby be involved in immunoregulation through LPS neutralization. May contribute to epididymal innate immunity and protect the sperm against attack by microorganisms. This is Defensin beta 118 (DEFB118) from Homo sapiens (Human).